A 404-amino-acid chain; its full sequence is Tryptophan synthase beta chain (404 aa).

Lysine 98 bears the N6-(pyridoxal phosphate)lysine mark.

It belongs to the TrpB family. As to quaternary structure, tetramer of two alpha and two beta chains. It depends on pyridoxal 5'-phosphate as a cofactor.

The catalysed reaction is (1S,2R)-1-C-(indol-3-yl)glycerol 3-phosphate + L-serine = D-glyceraldehyde 3-phosphate + L-tryptophan + H2O. It functions in the pathway amino-acid biosynthesis; L-tryptophan biosynthesis; L-tryptophan from chorismate: step 5/5. Its function is as follows. The beta subunit is responsible for the synthesis of L-tryptophan from indole and L-serine. This chain is Tryptophan synthase beta chain, found in Acidiphilium cryptum (strain JF-5).